The chain runs to 184 residues: MPVMPDHWIREQAVSNGMIDPFVETQKRDGVISYGLSSYGYDARVADDFKIFTNVDSAVVDPKNFSSDSFVDRKGPVCIIPPNSFALAHTVEYFRIPRDVLVICLGKSTYARCGIIVNVTPLEPEWEGQVTIEISNTTPLPAKIYANEGICQFLFLQGSAPPETSYADKAGKYMRQRGVSLPRL.

107-112 (KSTYAR) serves as a coordination point for dCTP. The active-site Proton donor/acceptor is Glu-133. Positions 152, 166, and 176 each coordinate dCTP.

Belongs to the dCTP deaminase family. Homotrimer.

The enzyme catalyses dCTP + H2O + H(+) = dUTP + NH4(+). It participates in pyrimidine metabolism; dUMP biosynthesis; dUMP from dCTP (dUTP route): step 1/2. Its function is as follows. Catalyzes the deamination of dCTP to dUTP. This chain is dCTP deaminase, found in Acidiphilium cryptum (strain JF-5).